A 1413-amino-acid polypeptide reads, in one-letter code: ABC-type transporter vrcC (1413 aa).

The ABC transporter 1 domain maps to 108-365; it reads VWFEALALAR…FLDMGFACPE (258 aa). A glycan (N-linked (GlcNAc...) asparagine) is linked at asparagine 289. Residues 476-496 traverse the membrane as a helical segment; sequence VTISSLIGNVITALVIASIFY. A glycan (N-linked (GlcNAc...) asparagine) is linked at asparagine 501. A run of 2 helical transmembrane segments spans residues 510 to 530 and 564 to 584; these read ALLF…MLTL and VLNA…VLLG. The N-linked (GlcNAc...) asparagine glycan is linked to asparagine 675. A helical membrane pass occupies residues 683-703; sequence IGIILAFMVVLGAIYLVATDF. A disordered region spans residues 725–748; sequence SGKPDDFEGGSDRNASQEKSKSDR. A glycan (N-linked (GlcNAc...) asparagine) is linked at asparagine 738. Residues 739-748 are compositionally biased toward basic and acidic residues; it reads ASQEKSKSDR. Residues 761 to 1003 enclose the ABC transporter 2 domain; sequence FQWQDVCFDI…ILIDYFVRNG (243 aa). A run of 6 helical transmembrane segments spans residues 1105-1125, 1142-1162, 1191-1211, 1230-1250, 1266-1286, and 1290-1310; these read IYIY…GFSL, IFLL…HFVT, LFWN…PIGM, LLIW…IAAL, LCLL…FWIF, and VSPF…DTTV. N-linked (GlcNAc...) asparagine glycosylation occurs at asparagine 1324. A helical membrane pass occupies residues 1378–1398; it reads FGLMWVFIFTNIVAACLLYWW.

This sequence belongs to the ABC transporter superfamily. ABCG family. PDR (TC 3.A.1.205) subfamily.

It localises to the cell membrane. Functionally, ABC-type transporter; part of the gene cluster that mediates the biosynthesis of the sesterterpene variecolin. VrcC is probably involved in the secretion of variecolin. The chain is ABC-type transporter vrcC from Aspergillus aculeatus (strain ATCC 16872 / CBS 172.66 / WB 5094).